Here is a 411-residue protein sequence, read N- to C-terminus: Pyruvate dehydrogenase E1 component subunit alpha, mitochondrial (411 aa).

The transit peptide at 1–29 directs the protein to the mitochondrion; that stretch reads MFSRAVRLSRAALPIRVASQRVPIAARRS. Pyruvate contacts are provided by H111, Y137, R138, G184, V186, D215, G216, A217, N244, and Y246. Y137, R138, G184, V186, D215, G216, A217, and N244 together coordinate thiamine diphosphate. Residue D215 coordinates Mg(2+). The Mg(2+) site is built by N244 and Y246. H311 contributes to the thiamine diphosphate binding site.

In terms of assembly, eukaryotic pyruvate dehydrogenase (PDH) complexes are organized as a core consisting of the oligomeric dihydrolipoamide acetyl-transferase (E2), around which are arranged multiple copies of pyruvate dehydrogenase (E1), dihydrolipoamide dehydrogenase (E3) and protein X (E3BP) bound by non-covalent bonds. The Chaetomium thermophilum PDH complex contains 60 E2 units, 12 E3BP units, about 20 E1 units, and 12 or more E3 units. The units are organized in 1 E2 60-mer, 4 E3BP trimers, about 20 E1 tetramers, and a maximum of 12 E3 dimers. Pyruvate dehydrogenase (E1) is active as a tetramer of 2 alpha and 2 beta subunits. The E3BP trimers are bound inside the icosahedral core with tetrahedral symmetry. Thiamine diphosphate serves as cofactor. The cofactor is Mg(2+).

Its subcellular location is the mitochondrion. The enzyme catalyses N(6)-[(R)-lipoyl]-L-lysyl-[protein] + pyruvate + H(+) = N(6)-[(R)-S(8)-acetyldihydrolipoyl]-L-lysyl-[protein] + CO2. Its function is as follows. The 10-megadalton pyruvate dehydrogenase complex contains multiple copies of three enzymatic components: pyruvate dehydrogenase (E1), dihydrolipoamide acetyltransferase (E2) and lipoamide dehydrogenase (E3) and catalyzes the overall oxidative decarboxylation of pyruvate to form acetyl-CoA and CO(2). Within the complex, pyruvate and thiamine pyrophosphate (TPP or vitamin B1) are bound by pyruvate dehydrogenase E1 subunits alpha and beta and pyruvate is decarboxylated leading to the 2-carbon hydrohyethyl bound to TPP. The E2 component contains covalently-bound lipoyl cofactors and transfers the hydroxyethyl group from TPP to an oxidized form of covalently bound lipoamide, and the resulting acetyl group is then transferred to free coenzyme A to form acetyl-CoA and reduced dihydrolipoamide-E2. Finally, the flavoprotein dihydrolipoamide dehydrogenase (E3) re-oxidizes the lipoyl group of dihydrolipoamide-E2 to form lipoamide-E2 and NADH. A fourth subunit, E3BP, is responsible for tethering E3 in proximity to the core, forming the entire metabolon. This Chaetomium thermophilum (strain DSM 1495 / CBS 144.50 / IMI 039719) (Thermochaetoides thermophila) protein is Pyruvate dehydrogenase E1 component subunit alpha, mitochondrial.